The following is a 509-amino-acid chain: Phosphoenolpyruvate carboxylase (509 aa).

The protein belongs to the PEPCase type 2 family. Homotetramer. The cofactor is Mg(2+).

It catalyses the reaction oxaloacetate + phosphate = phosphoenolpyruvate + hydrogencarbonate. Its function is as follows. Catalyzes the irreversible beta-carboxylation of phosphoenolpyruvate (PEP) to form oxaloacetate (OAA), a four-carbon dicarboxylic acid source for the tricarboxylic acid cycle. In Metallosphaera sedula (strain ATCC 51363 / DSM 5348 / JCM 9185 / NBRC 15509 / TH2), this protein is Phosphoenolpyruvate carboxylase.